The primary structure comprises 932 residues: DNA mismatch repair protein MutS (932 aa).

615–622 lines the ATP pocket; it reads GPNMAGKS.

It belongs to the DNA mismatch repair MutS family.

This protein is involved in the repair of mismatches in DNA. It is possible that it carries out the mismatch recognition step. This protein has a weak ATPase activity. The protein is DNA mismatch repair protein MutS of Clostridium botulinum (strain Hall / ATCC 3502 / NCTC 13319 / Type A).